A 323-amino-acid chain; its full sequence is MKFWRFVQILFFLGVAAVGLVVAVMIANADDTTLFDRMQLPDGDPNKLNYYIQPAPNGNEKVPFPTIFDPASVYLSLVVPAYNEEKRLPKMLDETLNYLKSREEKDKSFTWEIVIVNDGSKDKTKEVVLNYAKEYPNIFLLNQPVNMGKGAAIQAGCLHVRGELVLMLDADGATKIDDFEVLEKEIKSLMKTTNQAIVIGSRAQNEKAKRTPLRKFLSIGMHTLIVLSGVHGIRDTQCGFKLFTRESCKMIFMNQHVQRWCCDPEILVIARRLGMKISELPVEWNEIDGSKMKISGMIKMATDLIKIAIFHRVGAWKIRDRRH.

Residues 1 to 5 are Lumenal-facing; that stretch reads MKFWR. A helical transmembrane segment spans residues 6–26; the sequence is FVQILFFLGVAAVGLVVAVMI. Residues 27 to 323 lie on the Cytoplasmic side of the membrane; the sequence is ANADDTTLFD…GAWKIRDRRH (297 aa).

This sequence belongs to the glycosyltransferase 2 family.

Its subcellular location is the endoplasmic reticulum membrane. It carries out the reaction a di-trans,poly-cis-dolichyl phosphate + UDP-alpha-D-glucose = a di-trans,poly-cis-dolichyl beta-D-glucosyl phosphate + UDP. It participates in protein modification; protein glycosylation. Its function is as follows. Dolichyl-phosphate beta-glucosyltransferase involved in the glycosylation of glycoproteins through the synthesis of dolichyl beta-D-glucosyl phosphate which serves as a sugar donor for transfer of three glucose residues to the Man-9-GlcNAc-2-PP-dolichol precursor to N-glycans. This chain is Dolichyl-phosphate beta-glucosyltransferase ALG5A, found in Trichomonas vaginalis (strain ATCC PRA-98 / G3).